The chain runs to 481 residues: tRNA pseudouridine(38/39) synthase (481 aa).

Alanine 2 carries the post-translational modification N-acetylalanine. Residues 29–40 show a composition bias toward basic and acidic residues; it reads KKEQANNKDSNI. The segment at 29-54 is disordered; sequence KKEQANNKDSNIRENSSGAGGKPKRA. Catalysis depends on aspartate 118, which acts as the Nucleophile. Substrate is bound at residue tyrosine 195. A Phosphothreonine modification is found at threonine 456.

The protein belongs to the tRNA pseudouridine synthase TruA family.

It is found in the nucleus. The catalysed reaction is uridine(38/39) in tRNA = pseudouridine(38/39) in tRNA. In terms of biological role, formation of pseudouridine at position 39 in the anticodon stem and loop of transfer RNAs. This is tRNA pseudouridine(38/39) synthase (PUS3) from Bos taurus (Bovine).